We begin with the raw amino-acid sequence, 266 residues long: MRLIPLTTAEQVGKWAARHIVNRINAFKPTADRPFVLGLPTGGTPMTTYKALVEMHKAGQVSFKHVVTFNMDEYVGLPKEHPESYYSFMHRNFFDHVDIPAENINLLNGNAPDIDAECRQYEEKIRSYGKIHLFMGGVGNDGHIAFNEPASSLASRTRIKTLTHDTRVANSRFFDNDVNQVPKYALTVGVGTLLDAEEVMILVLGSQKALALQAAVEGCVNHMWTISCLQLHPKAIMVCDEPSTMELKVKTLRYFNELEAENIKGL.

D72 serves as the catalytic Proton acceptor; for enolization step. Residue D141 is the For ring-opening step of the active site. Residue H143 is the Proton acceptor; for ring-opening step of the active site. E148 serves as the catalytic For ring-opening step.

It belongs to the glucosamine/galactosamine-6-phosphate isomerase family. NagB subfamily. In terms of assembly, homohexamer; trimer of disulfide-linked dimers.

It catalyses the reaction alpha-D-glucosamine 6-phosphate + H2O = beta-D-fructose 6-phosphate + NH4(+). It participates in amino-sugar metabolism; N-acetylneuraminate degradation; D-fructose 6-phosphate from N-acetylneuraminate: step 5/5. Its activity is regulated as follows. Allosterically activated by N-acetylglucosamine 6-phosphate (GlcNAc6P). In terms of biological role, catalyzes the reversible isomerization-deamination of glucosamine 6-phosphate (GlcN6P) to form fructose 6-phosphate (Fru6P) and ammonium ion. The protein is Glucosamine-6-phosphate deaminase of Shigella boydii serotype 18 (strain CDC 3083-94 / BS512).